Consider the following 267-residue polypeptide: Imidazole glycerol phosphate synthase subunit HisF (267 aa).

Active-site residues include aspartate 22 and aspartate 141.

This sequence belongs to the HisA/HisF family. In terms of assembly, heterodimer of HisH and HisF.

It localises to the cytoplasm. The enzyme catalyses 5-[(5-phospho-1-deoxy-D-ribulos-1-ylimino)methylamino]-1-(5-phospho-beta-D-ribosyl)imidazole-4-carboxamide + L-glutamine = D-erythro-1-(imidazol-4-yl)glycerol 3-phosphate + 5-amino-1-(5-phospho-beta-D-ribosyl)imidazole-4-carboxamide + L-glutamate + H(+). Its pathway is amino-acid biosynthesis; L-histidine biosynthesis; L-histidine from 5-phospho-alpha-D-ribose 1-diphosphate: step 5/9. Functionally, IGPS catalyzes the conversion of PRFAR and glutamine to IGP, AICAR and glutamate. The HisF subunit catalyzes the cyclization activity that produces IGP and AICAR from PRFAR using the ammonia provided by the HisH subunit. This chain is Imidazole glycerol phosphate synthase subunit HisF, found in Mycobacterium bovis (strain ATCC BAA-935 / AF2122/97).